The primary structure comprises 149 residues: Oligosaccharyltransferase complex subunit OSTC (149 aa).

Topologically, residues 1-32 (METLFRLPFAVLECPNIKLKRPGWVHMPSAMT) are cytoplasmic. The chain crosses the membrane as a helical span at residues 33–53 (VYALVVVSYFLITGGIIYDVI). The Extracellular portion of the chain corresponds to 54 to 83 (VEPPSVGSMTDEHGHQRPVAFLAYRVNGQY). A helical transmembrane segment spans residues 84–104 (IMEGLASSFLFTMGGLGFIIL). Over 105 to 117 (DRSNAPNIPKLNR) the chain is Cytoplasmic. The helical transmembrane segment at 118–138 (FLLLFIGFVSVLLSFFMARVF) threads the bilayer. The Extracellular portion of the chain corresponds to 139–149 (MRMKLPGYLMG).

Belongs to the OSTC family. In terms of assembly, specific component of the STT3A-containing form of the oligosaccharyltransferase (OST) complex.

The protein resides in the membrane. Its pathway is protein modification; protein glycosylation. Functionally, specific component of the STT3A-containing form of the oligosaccharyl transferase (OST) complex that catalyzes the initial transfer of a defined glycan (Glc(3)Man(9)GlcNAc(2) in eukaryotes) from the lipid carrier dolichol-pyrophosphate to an asparagine residue within an Asn-X-Ser/Thr consensus motif in nascent polypeptide chains, the first step in protein N-glycosylation. N-glycosylation occurs cotranslationally and the complex associates with the Sec61 complex at the channel-forming translocon complex that mediates protein translocation across the endoplasmic reticulum (ER). All subunits are required for a maximal enzyme activity. This Gallus gallus (Chicken) protein is Oligosaccharyltransferase complex subunit OSTC.